Here is a 404-residue protein sequence, read N- to C-terminus: Rhomboid-related protein 3 (404 aa).

2 consecutive EF-hand domains span residues 34–69 (APED…HSSK) and 70–105 (LDPH…KRSN). The next 7 helical transmembrane spans lie at 164-184 (WFMI…GVSL), 218-238 (IFMH…LLVG), 250-270 (IGLV…VADM), 274-294 (VVGS…NIVM), 303-325 (FKLL…AVWL), 338-358 (PSFV…VVVL), and 371-391 (WWIF…WNIF). Ser-278 (nucleophile) is an active-site residue. Residue His-343 is part of the active site.

This sequence belongs to the peptidase S54 family.

Its subcellular location is the membrane. The enzyme catalyses Cleaves type-1 transmembrane domains using a catalytic dyad composed of serine and histidine that are contributed by different transmembrane domains.. Its function is as follows. May be involved in regulated intramembrane proteolysis and the subsequent release of functional polypeptides from their membrane anchors. This is Rhomboid-related protein 3 (RHBDL3) from Homo sapiens (Human).